We begin with the raw amino-acid sequence, 233 residues long: 27 kDa hemolymph glycoprotein (233 aa).

The first 17 residues, 1-17 (MIWKTLIVAFMATAVLA), serve as a signal peptide directing secretion. Residues Asn-125 and Asn-156 are each glycosylated (N-linked (GlcNAc...) asparagine).

Belongs to the UPF0408 family. Post-translationally, N-glycosylated. As to expression, hemolymph.

The protein localises to the secreted. The sequence is that of 27 kDa hemolymph glycoprotein from Manduca sexta (Tobacco hawkmoth).